Reading from the N-terminus, the 218-residue chain is 7-cyano-7-deazaguanine synthase (218 aa).

ATP is bound at residue 9-19 (YSGGMDSFTVL). Positions 185, 193, 196, and 199 each coordinate Zn(2+).

Belongs to the QueC family. Requires Zn(2+) as cofactor.

It catalyses the reaction 7-carboxy-7-deazaguanine + NH4(+) + ATP = 7-cyano-7-deazaguanine + ADP + phosphate + H2O + H(+). It participates in purine metabolism; 7-cyano-7-deazaguanine biosynthesis. Its function is as follows. Catalyzes the ATP-dependent conversion of 7-carboxy-7-deazaguanine (CDG) to 7-cyano-7-deazaguanine (preQ(0)). The polypeptide is 7-cyano-7-deazaguanine synthase (Alteromonas mediterranea (strain DSM 17117 / CIP 110805 / LMG 28347 / Deep ecotype)).